A 287-amino-acid chain; its full sequence is tRNA selenocysteine 1-associated protein 1 (287 aa).

2 consecutive RRM domains span residues Ala-3–Tyr-86 and Tyr-96–Pro-175.

The protein belongs to the RRM TRSPAP family. Component of the tRNA(Sec) complex composed at least of EEFSEC, SECISBP2, SEPHS1, SEPSECS, TRNAU1AP and tRNA(Sec). Found in a complex with tRNA(Sec). Interacts with SEPSECS. Associates with mRNP and/or polysomes. Found in a complex with EEFSEC, SECISBP2, TRNAU1AP and tRNA(Sec).

The protein resides in the nucleus. It is found in the cytoplasm. Functionally, involved in the early steps of selenocysteine biosynthesis and tRNA(Sec) charging to the later steps resulting in the cotranslational incorporation of selenocysteine into selenoproteins. Stabilizes the SECISBP2, EEFSEC and tRNA(Sec) complex. May be involved in the methylation of tRNA(Sec). Enhances efficiency of selenoproteins synthesis. The chain is tRNA selenocysteine 1-associated protein 1 (TRNAU1AP) from Homo sapiens (Human).